The primary structure comprises 115 residues: NADH-ubiquinone oxidoreductase chain 3 (115 aa).

The next 3 membrane-spanning stretches (helical) occupy residues 4–24 (MLIL…AFWL), 55–75 (FFLV…LLPL), and 86–106 (MLMT…AYEW).

Belongs to the complex I subunit 3 family. As to quaternary structure, core subunit of respiratory chain NADH dehydrogenase (Complex I) which is composed of 45 different subunits. Interacts with TMEM186. Interacts with TMEM242.

The protein resides in the mitochondrion inner membrane. It catalyses the reaction a ubiquinone + NADH + 5 H(+)(in) = a ubiquinol + NAD(+) + 4 H(+)(out). Its function is as follows. Core subunit of the mitochondrial membrane respiratory chain NADH dehydrogenase (Complex I) which catalyzes electron transfer from NADH through the respiratory chain, using ubiquinone as an electron acceptor. Essential for the catalytic activity of complex I. The sequence is that of NADH-ubiquinone oxidoreductase chain 3 from Microtus pennsylvanicus (Meadow vole).